A 64-amino-acid chain; its full sequence is Large ribosomal subunit protein uL29 (64 aa).

It belongs to the universal ribosomal protein uL29 family.

The sequence is that of Large ribosomal subunit protein uL29 from Psychrobacter sp. (strain PRwf-1).